Reading from the N-terminus, the 581-residue chain is Moesin/ezrin/radixin homolog 1 (581 aa).

The FERM domain occupies 8 to 298 (MNVRVTTMDA…GNHELYMRRR (291 aa)). The tract at residues 452-519 (QVAKGSRAAA…EERRTLAERN (68 aa)) is disordered. Low complexity predominate over residues 459 to 469 (AAAALQAATTT). The span at 477–486 (EEEENEEELI) shows a compositional bias: acidic residues. The span at 495–519 (FSKDFDTDEHIKDPVEERRTLAERN) shows a compositional bias: basic and acidic residues. Phosphothreonine is present on Thr-562.

In terms of assembly, interacts with cytoskeletal actin.

The protein resides in the cell junction. It is found in the adherens junction. The protein localises to the cell projection. It localises to the microvillus. Its subcellular location is the rhabdomere. The protein resides in the cell membrane. It is found in the cytoplasm. The protein localises to the cytoskeleton. Functionally, involved in connections of major cytoskeletal structures to the plasma membrane. This chain is Moesin/ezrin/radixin homolog 1, found in Anopheles gambiae (African malaria mosquito).